Reading from the N-terminus, the 387-residue chain is Protein-glutamate methylesterase/protein-glutamine glutaminase 2 (387 aa).

A Response regulatory domain is found at 4–121 (KVLVVDDSGF…SRNPQKVKQL (118 aa)). At aspartate 55 the chain carries 4-aspartylphosphate. Residues 148-183 (AAPAAPTSSSRAPAPTTAPARAVPTRTAAPATAPAA) show a composition bias toward low complexity. The interval 148 to 199 (AAPAAPTSSSRAPAPTTAPARAVPTRTAAPATAPAAHAHHAPAHPTTSGTPK) is disordered. The CheB-type methylesterase domain maps to 192–384 (PTTSGTPKRK…LDDIGRHLVE (193 aa)). Catalysis depends on residues serine 211, histidine 238, and aspartate 331.

Belongs to the CheB family. Phosphorylated by CheA. Phosphorylation of the N-terminal regulatory domain activates the methylesterase activity.

Its subcellular location is the cytoplasm. It catalyses the reaction [protein]-L-glutamate 5-O-methyl ester + H2O = L-glutamyl-[protein] + methanol + H(+). It carries out the reaction L-glutaminyl-[protein] + H2O = L-glutamyl-[protein] + NH4(+). Involved in chemotaxis. Part of a chemotaxis signal transduction system that modulates chemotaxis in response to various stimuli. Catalyzes the demethylation of specific methylglutamate residues introduced into the chemoreceptors (methyl-accepting chemotaxis proteins or MCP) by CheR. Also mediates the irreversible deamidation of specific glutamine residues to glutamic acid. The protein is Protein-glutamate methylesterase/protein-glutamine glutaminase 2 of Pseudomonas savastanoi pv. phaseolicola (strain 1448A / Race 6) (Pseudomonas syringae pv. phaseolicola (strain 1448A / Race 6)).